Reading from the N-terminus, the 396-residue chain is Pectate lyase 5 (396 aa).

The signal sequence occupies residues 1 to 25 (MGIKHCCYILYFTLALVTLLQPVRS). Asparagine 36 carries N-linked (GlcNAc...) asparagine glycosylation. Residues cysteine 53 and cysteine 70 are joined by a disulfide bond. Ca(2+) contacts are provided by aspartate 193, aspartate 217, and aspartate 221. Arginine 273 is a catalytic residue.

This sequence belongs to the polysaccharide lyase 1 family. Amb a subfamily. In terms of assembly, monomer. It depends on Ca(2+) as a cofactor. In terms of processing, the N-terminus is blocked. Pollen and flowers.

The catalysed reaction is Eliminative cleavage of (1-&gt;4)-alpha-D-galacturonan to give oligosaccharides with 4-deoxy-alpha-D-galact-4-enuronosyl groups at their non-reducing ends.. It participates in glycan metabolism; pectin degradation; 2-dehydro-3-deoxy-D-gluconate from pectin: step 2/5. In terms of biological role, has pectate lyase activity. In Ambrosia artemisiifolia (Common ragweed), this protein is Pectate lyase 5.